The sequence spans 273 residues: Gamma-glutamyl cyclotransferase gliK (273 aa).

A helical transmembrane segment spans residues 227 to 243; the sequence is WLGWIILTLYGLMWSYH.

This sequence belongs to the class-I pyridoxal-phosphate-dependent aminotransferase family.

The protein resides in the membrane. The catalysed reaction is an alpha-(gamma-L-glutamyl)-L-amino acid = 5-oxo-L-proline + an L-alpha-amino acid. It participates in mycotoxin biosynthesis. Functionally, gamma-glutamyl cyclotransferase-like protein; part of the gene cluster that mediates the biosynthesis of gliotoxin, a member of the epipolythiodioxopiperazine (ETP) class of toxins characterized by a disulfide bridged cyclic dipeptide. The first step in gliotoxin biosynthesis is the condensation of serine and phenylalanine to form the cyclo-L-phenylalanyl-L-serine diketopiperazine (DKP) by the NRPS gliP. GliP is also able to produce the DKP cyclo-L-tryptophanyl-L-serine, suggesting that the substrate specificity of the first adenylation (A) domain in gliP is sufficiently relaxed to accommodate both L-Phe and L-Trp. The cytochrome P450 monooxygenase gliC has been shown to catalyze the subsequent hydroxylation of the alpha-carbon of L-Phe in cyclo-L-phenylalanyl-L-serine whereas the second cytochrome P450 enzyme, gliF, is presumably involved in the modification of the DKP side chain. The glutathione S-transferase (GST) gliG then forms a bis-glutathionylated biosynthetic intermediate which is responsible for the sulfurization of gliotoxin. This bis-glutathionylated intermediate is subsequently processed by the gamma-glutamyl cyclotransferase gliK to remove both gamma-glutamyl moieties. Subsequent processing via gliI yields a biosynthetic intermediate, which is N-methylated via the N-methyltransferase gliN, before the gliotoxin oxidoreductase gliT-mediated disulfide bridge closure. GliN-mediated amide methylation confers stability to ETP, damping the spontaneous formation of tri- and tetrasulfides. Intracellular dithiol gliotoxin oxidized by gliT is subsequently effluxed by gliA. Gliotoxin contributes to pathogenesis during invasive aspergillosis. In macrophages and neutrophils, gliotoxin showed inhibition of various different cell functions including cytokine production, antigen presentation, phagocytosis, and production of reactive oxygen species. This is Gamma-glutamyl cyclotransferase gliK from Aspergillus fumigatus (strain ATCC MYA-4609 / CBS 101355 / FGSC A1100 / Af293) (Neosartorya fumigata).